The sequence spans 801 residues: MDRLVFSYCPSSKVTARFLVKFCFIEYQDSQEPCICTIQLFSGNESGSLMQKCFVSKIPNKSLLPTELSKISTHEWLDFGVTVSELSLNAKFVVSAWKPSFNDEEVYEFVGCTTYRLFDENNLLRQGLQKIPLQTSKEIKKYSPTSLELEQVKEINRLDGLLLKLQLGDVPSVNWLDDISFGKIKDFRSKHMSLVTIPILYLDFLQFSFPVVFQRSYYPKSENRVYYSSFDLELNLDSPAELKHRRLVRSQRNGPLDKDLKPNSKIRKELESILSYPPSEELSLEEKDLIWKFRFYLTRNKKAMTKFLKSVVWTDSSEVNQALSLLDSWTEIDIDDALELLSPSFVHPKVRAYAVSRLETASNEELLLYLLQLVQALRYDNPISSDERFQPSPLALFLVNRAISSPSIGNDLYWYLVVEIEDEPVSKLFSSVMFLFQKELSKSVEGRLIRETLSAQAKFVEKLLRISKSVQSFRGTRLKKIEYLKVLLEDHKYHLLDFHALPLPLDPSVNIVGIIPDACTVFKSTMQPLRLLFKCQDGSKYPIIFKNGDDLRQDQLVIQILTLMDKLLKKEKLDLHLKPYRILATGPTHGAVQFVPSKTLATILAEYHGSVLAYLRENNPDDGLNSANYGIDPVAMDNYVRSCAGYCVITYLLGVGDRHLDNLLITKDGHFFHADFGYILGRDPKLFSPAMKLSKEMVEGMGGYNSPFYQQFKSYCYTTFTALRKSSNLILNLFSLMVDANIPDIKFDKEKVVYKVKERFCLQMSESDAIKYFEQLINDSVSALFPQIIDRMHNLAQYMRS.

The C2 PI3K-type domain occupies Val14–Gln166. One can recognise a PIK helical domain in the interval Asp257–Glu439. In terms of domain architecture, PI3K/PI4K catalytic spans Ile515–Phe785. Residues Val521–Gln527 are G-loop. The segment at Gly654–Asn662 is catalytic loop. An activation loop region spans residues His673–Ser694.

The protein belongs to the PI3/PI4-kinase family. In terms of assembly, component of the autophagy-specific vps34 PI3-kinase complex I composed of vps15, atg6, pik3/vps34, atg14 and atg38. Also a component of the VPS34 PI3-kinase complex II composed of atg6, pik3, vps15 and vps38.

It carries out the reaction a 1,2-diacyl-sn-glycero-3-phospho-(1D-myo-inositol) + ATP = a 1,2-diacyl-sn-glycero-3-phospho-(1D-myo-inositol-3-phosphate) + ADP + H(+). Functionally, phosphatidylinositol 3-kinase that functions as a part of the autophagy-specific VPS34 PI3-kinase complex I that plays a role in autophagosome assembly. This complex is essential to recruit the atg8-phosphatidylinositol conjugate and the atg12-atg5 conjugate to the pre-autophagosomal structure. Also functions as part of the VPS34 PI3-kinase complex II. The protein is Phosphatidylinositol 3-kinase pik3 (pik3) of Schizosaccharomyces pombe (strain 972 / ATCC 24843) (Fission yeast).